The sequence spans 245 residues: Ribosomal RNA small subunit methyltransferase G (245 aa).

Residues G90, L95, 140–141, and R158 contribute to the S-adenosyl-L-methionine site; that span reads AE. The disordered stretch occupies residues 223–245; the sequence is VVSARRAKPPHPKSARTGKAGTR. Positions 227–245 are enriched in basic residues; it reads RRAKPPHPKSARTGKAGTR.

This sequence belongs to the methyltransferase superfamily. RNA methyltransferase RsmG family.

The protein localises to the cytoplasm. Functionally, specifically methylates the N7 position of guanine in position 518 of 16S rRNA. This Mycobacterium avium (strain 104) protein is Ribosomal RNA small subunit methyltransferase G.